We begin with the raw amino-acid sequence, 511 residues long: Archaeal glutamate synthase [NADPH] (511 aa).

2 consecutive 4Fe-4S ferredoxin-type domains span residues 15-44 and 46-75; these read FMIE…YDEE and DMMR…VKPH. Cys24, Cys27, Cys30, Cys34, Cys55, Cys58, Cys61, and Cys65 together coordinate [4Fe-4S] cluster.

The protein belongs to the glutamate synthase family. The cofactor is FMN.

The catalysed reaction is 2 L-glutamate + NADP(+) = L-glutamine + 2-oxoglutarate + NADPH + H(+). This is Archaeal glutamate synthase [NADPH] from Archaeoglobus fulgidus (strain ATCC 49558 / DSM 4304 / JCM 9628 / NBRC 100126 / VC-16).